The sequence spans 72 residues: Large ribosomal subunit protein uL29 (72 aa).

Belongs to the universal ribosomal protein uL29 family. As to quaternary structure, part of the 50S ribosomal subunit.

The protein is Large ribosomal subunit protein uL29 of Pyrococcus furiosus (strain ATCC 43587 / DSM 3638 / JCM 8422 / Vc1).